A 123-amino-acid chain; its full sequence is Large ribosomal subunit protein uL18 (123 aa).

Belongs to the universal ribosomal protein uL18 family. As to quaternary structure, part of the 50S ribosomal subunit; part of the 5S rRNA/L5/L18/L25 subcomplex. Contacts the 5S and 23S rRNAs.

Its function is as follows. This is one of the proteins that bind and probably mediate the attachment of the 5S RNA into the large ribosomal subunit, where it forms part of the central protuberance. The sequence is that of Large ribosomal subunit protein uL18 from Chlamydia felis (strain Fe/C-56) (Chlamydophila felis).